The sequence spans 878 residues: Alanine--tRNA ligase (878 aa).

Residues H567, H571, C669, and H673 each coordinate Zn(2+).

Belongs to the class-II aminoacyl-tRNA synthetase family. Zn(2+) is required as a cofactor.

Its subcellular location is the cytoplasm. The enzyme catalyses tRNA(Ala) + L-alanine + ATP = L-alanyl-tRNA(Ala) + AMP + diphosphate. Its function is as follows. Catalyzes the attachment of alanine to tRNA(Ala) in a two-step reaction: alanine is first activated by ATP to form Ala-AMP and then transferred to the acceptor end of tRNA(Ala). Also edits incorrectly charged Ser-tRNA(Ala) and Gly-tRNA(Ala) via its editing domain. The polypeptide is Alanine--tRNA ligase (Rickettsia felis (strain ATCC VR-1525 / URRWXCal2) (Rickettsia azadi)).